A 502-amino-acid chain; its full sequence is MRKGQGYSYSVIASVLVLLCVVVSRIECSSQVHALSRLYLSKRGVGGSSTMDTSHFKAVKDLKPSSLRSAANQEGLRKRDLIRRLPGQPPVSFDQYGGYVTVNESAGRSFFYYFVEASKSKDSSPLLLWLNGGPGCSSLAYGALQELGPFRVHSDGKTLFRNRYAWNNAANVLFLESPAGVGFSYTNTTSDLEKHGDRNTAADNYIFLVNWLERFPEYKGRDLYIAGESYAGHYVPQLAHTILLHHRSFFNLKGILIGNAVINDETDLMGMYDFFESHALISEDSLARLKSNCDLKTESASVMTEECAVVSDQIDMDTYYLDIYNIYAPLCLNSTLTRRPKRGTTIREFDPCSDHYVQAYLNRPEVQAALHANATKLPYEWQPCSSVIKKWNDSPTTVIPLIKELMGQGVRVWVFSGDTDGRIPVTSTKYSLKKMNLTAKTAWHPWYLGGEVGGYTEEYKGKLTFATVRGAGHQVPSFQPKRSLSLFIHFLNDTPLPDTSRY.

The first 24 residues, 1 to 24 (MRKGQGYSYSVIASVLVLLCVVVS), serve as a signal peptide directing secretion. N-linked (GlcNAc...) asparagine glycans are attached at residues Asn-103 and Asn-187. 3 disulfides stabilise this stretch: Cys-136-Cys-384, Cys-293-Cys-307, and Cys-331-Cys-352. Ser-229 is a catalytic residue. N-linked (GlcNAc...) asparagine glycans are attached at residues Asn-333 and Asn-373. Asp-420 is an active-site residue. Asn-436 carries N-linked (GlcNAc...) asparagine glycosylation. Residue His-473 is part of the active site.

This sequence belongs to the peptidase S10 family. As to expression, expressed in roots, leaves, flowers and siliques.

Its subcellular location is the secreted. Probable carboxypeptidase. The polypeptide is Serine carboxypeptidase-like 40 (SCPL40) (Arabidopsis thaliana (Mouse-ear cress)).